Here is a 93-residue protein sequence, read N- to C-terminus: Cobalt transport protein CbiN (93 aa).

Helical transmembrane passes span 5–25 (LILL…NHGG) and 63–83 (LLFT…LGYA).

This sequence belongs to the CbiN family. In terms of assembly, forms an energy-coupling factor (ECF) transporter complex composed of an ATP-binding protein (A component, CbiO), a transmembrane protein (T component, CbiQ) and 2 possible substrate-capture proteins (S components, CbiM and CbiN) of unknown stoichimetry.

The protein resides in the cell inner membrane. It functions in the pathway cofactor biosynthesis; adenosylcobalamin biosynthesis. In terms of biological role, part of the energy-coupling factor (ECF) transporter complex CbiMNOQ involved in cobalt import. This chain is Cobalt transport protein CbiN, found in Klebsiella pneumoniae subsp. pneumoniae (strain ATCC 700721 / MGH 78578).